Here is an 805-residue protein sequence, read N- to C-terminus: MAASGVPRGCDILIVYSPDAEEWCQYLQTLFLSSRQVRSQKILTHRLGPEASFSAEDLSLFLSTRCVVVLLSAELVQHFHKPALLPLLQRAFHPPHRVVRLLCGVRDSEEFLDFFPDWAHWQELTCDDEPETYVAAVKKAISEDSGCDSVTDTEPEDEKVVSYSKQQNLPTVTSPGNLMVVQPDRIRCGAETTVYVIVRCKLDDRVATEAEFSPEDSPSVRMEAKVENEYTISVKAPNLSSGNVSLKIYSGDLVVCETVISYYTDMEEIGNLLSNAANPVEFMCQAFKIVPYNTETLDKLLTESLKNNIPASGLHLFGINQLEEEDMMTNQRDEELPTLLHFAAKYGLKNLTALLLTCPGALQAYSVANKHGHYPNTIAEKHGFRDLRQFIDEYVETVDMLKSHIKEELMHGEEADAVYESMAHLSTDLLMKCSLNPGCDEDLYESMAAFVPAATEDLYVEMLQASTSNPIPGDGFSRATKDSMIRKFLEGNSMGMTNLERDQCHLGQEEDVYHTVDDDEAFSVDLASRPPVPVPRPETTAPGAHQLPDNEPYIFKVFAEKSQERPGNFYVSSESIRKGPPVRPWRDRPQSSIYDPFAGMKTPGQRQLITLQEQVKLGIVNVDEAVLHFKEWQLNQKKRSESFRFQQENLKRLRDSITRRQREKQKSGKQTDLEITVPIRHSQHLPAKVEFGVYESGPRKSVIPPRTELRRGDWKTDSTSSTASSTSNRSSTRSLLSVSSGMEGDNEDNEVPEVTRSRSPGPPQVDGTPTMSLERPPRVPPRAASQRPPTRETFHPPPPVPPRGR.

The TIR domain occupies 8-145 (RGCDILIVYS…AVKKAISEDS (138 aa)). The interval 10–144 (CDILIVYSPD…AAVKKAISED (135 aa)) is necessary and sufficient to mediate inhibition of NF-kappa-B downstream of activated TLRs; may mediate interaction with MYD88 and TIRAP. The disordered stretch occupies residues 145-165 (SGCDSVTDTEPEDEKVVSYSK). Residues 181–317 (VQPDRIRCGA…NIPASGLHLF (137 aa)) enclose the DBB domain. A Phosphotyrosine modification is found at Y263. 3 positions are modified to phosphotyrosine; by SYK: Y419, Y444, and Y459. Y513 carries the phosphotyrosine; by ABL1 modification. The segment at 527–547 (ASRPPVPVPRPETTAPGAHQL) is disordered. Y553 and Y570 each carry phosphotyrosine; by ABL1. Residues 571–590 (VSSESIRKGPPVRPWRDRPQ) are disordered. Phosphotyrosine; by ABL1 is present on Y594. Residue S642 is modified to Phosphoserine. Residues 645-667 (FQQENLKRLRDSITRRQREKQKS) are a coiled coil. Over residues 654–672 (RDSITRRQREKQKSGKQTD) the composition is skewed to basic and acidic residues. A disordered region spans residues 654 to 679 (RDSITRRQREKQKSGKQTDLEITVPI). Y694 is modified (phosphotyrosine; by ABL1). The disordered stretch occupies residues 697–805 (GPRKSVIPPR…PPPPVPPRGR (109 aa)). Residues 707 to 716 (TELRRGDWKT) are compositionally biased toward basic and acidic residues. Residues 717-740 (DSTSSTASSTSNRSSTRSLLSVSS) are compositionally biased toward low complexity. Residue S718 is modified to Phosphoserine. Positions 795–805 (HPPPPVPPRGR) are enriched in pro residues.

As to quaternary structure, homooligomer. Interacts (phosphorylated on tyrosine residues within YXXM motifs) with PIK3R1 (via SH2 domain); required for BCR- and TLR-mediated activation of phosphoinositide 3-kinase. Interacts (via polyproline C-terminal region) with ABI1 (via SH3 domain); the interaction promotes phosphorylation of PIK3AP1 by ABL1. May interact with MYD88 and TIRAP. Constitutively phosphorylated. Phosphorylated on tyrosine residues in C-terminal region by ABL1. Phosphorylated on tyrosine residues within the YXXM motifs by BTK and SYK. Isoform 1 and isoform 2 are phosphorylated on tyrosine residues, most likely within the YXXM motifs, via CD19 activation. Toll-like receptor activation induces appearance of a phosphorylated form associated with membranes. In terms of tissue distribution, expressed in natural killer (NK) cells.

It is found in the cytoplasm. It localises to the cell membrane. In terms of biological role, signaling adapter that contributes to B-cell development by linking B-cell receptor (BCR) signaling to the phosphoinositide 3-kinase (PI3K)-Akt signaling pathway. Has a complementary role to the BCR coreceptor CD19, coupling BCR and PI3K activation by providing a docking site for the PI3K subunit PIK3R1. Alternatively, links Toll-like receptor (TLR) signaling to PI3K activation, a process preventing excessive inflammatory cytokine production. Also involved in the activation of PI3K in natural killer cells. May be involved in the survival of mature B-cells via activation of REL. This Homo sapiens (Human) protein is Phosphoinositide 3-kinase adapter protein 1 (PIK3AP1).